We begin with the raw amino-acid sequence, 1193 residues long: Structural maintenance of chromosomes protein 3 homolog (1193 aa).

Residue 31–38 (GFNGSGKS) coordinates ATP. Position 101 is an N6-acetyllysine (Lys101). Coiled-coil stretches lie at residues 179-286 (SKKV…LNKT) and 332-483 (ILRV…EIIK). An SMC hinge domain is found at 505–631 (ENILGFLIDN…VKSLESCENY (127 aa)). Positions 665-993 (TVYNKLKELK…SHKNIKDMIQ (329 aa)) form a coiled coil.

The protein belongs to the SMC family. SMC3 subfamily. In terms of assembly, component of the cohesin complex. Acetylation at Lys-101 by ESCO1 is important for genome stability and S phase sister chromatid cohesion.

It is found in the nucleus. Central component of cohesin, a complex required for chromosome cohesion during the cell cycle. The cohesin complex may form a large proteinaceous ring within which sister chromatids can be trapped. At anaphase, the complex is cleaved and dissociates from chromatin, allowing sister chromatids to segregate. Cohesion is coupled to DNA replication and is involved in DNA repair. The cohesin complex also plays an important role in spindle pole assembly during mitosis and in chromosomes movement. This is Structural maintenance of chromosomes protein 3 homolog from Plasmodium falciparum (isolate 3D7).